We begin with the raw amino-acid sequence, 140 residues long: Nucleoside diphosphate kinase (140 aa).

6 residues coordinate ATP: lysine 11, phenylalanine 59, arginine 87, threonine 93, arginine 104, and asparagine 114. The Pros-phosphohistidine intermediate role is filled by histidine 117.

Belongs to the NDK family. As to quaternary structure, homotetramer. The cofactor is Mg(2+).

The protein localises to the cytoplasm. The enzyme catalyses a 2'-deoxyribonucleoside 5'-diphosphate + ATP = a 2'-deoxyribonucleoside 5'-triphosphate + ADP. It carries out the reaction a ribonucleoside 5'-diphosphate + ATP = a ribonucleoside 5'-triphosphate + ADP. Major role in the synthesis of nucleoside triphosphates other than ATP. The ATP gamma phosphate is transferred to the NDP beta phosphate via a ping-pong mechanism, using a phosphorylated active-site intermediate. The polypeptide is Nucleoside diphosphate kinase (Rickettsia canadensis (strain McKiel)).